A 119-amino-acid polypeptide reads, in one-letter code: Large ribosomal subunit protein uL18 (119 aa).

This sequence belongs to the universal ribosomal protein uL18 family. As to quaternary structure, part of the 50S ribosomal subunit; part of the 5S rRNA/L5/L18/L25 subcomplex. Contacts the 5S and 23S rRNAs.

This is one of the proteins that bind and probably mediate the attachment of the 5S RNA into the large ribosomal subunit, where it forms part of the central protuberance. The chain is Large ribosomal subunit protein uL18 from Borrelia hermsii (strain HS1 / DAH).